The sequence spans 518 residues: AarF domain-containing kinase 1 (518 aa).

The 320-residue stretch at 149-468 folds into the Protein kinase domain; that stretch reads SFEREPLGTA…SKCCVQSSYA (320 aa). Residues 155 to 163 and lysine 177 contribute to the ATP site; that span reads LGTASLAQV. Aspartate 309 functions as the Proton acceptor in the catalytic mechanism.

This sequence belongs to the protein kinase superfamily. ADCK protein kinase family.

It is found in the mitochondrion. Its function is as follows. Essential for maintaining mitochondrial cristae formation and mitochondrial function by acting via YME1L to regulate the mitochondrial structural proteins Opa1 and Mitofilin. This function is likely to be kinase-independent. Functions in tracheal development and larval molting probably by acting in sterol modification and/or intracellular lipid trafficking. The action of this enzyme is not yet clear. It is not known if it has protein kinase activity and what type of substrate it would phosphorylate (Ser, Thr or Tyr). The polypeptide is AarF domain-containing kinase 1 (Drosophila melanogaster (Fruit fly)).